A 410-amino-acid chain; its full sequence is Phosphoglycerate kinase (410 aa).

Substrate contacts are provided by residues 19–21, Arg-34, 57–60, Arg-114, and Arg-154; these read DLN and HQGK. ATP-binding positions include Glu-332 and 358–361; that span reads GGHS.

This sequence belongs to the phosphoglycerate kinase family. Homodimer.

The protein resides in the cytoplasm. It catalyses the reaction (2R)-3-phosphoglycerate + ATP = (2R)-3-phospho-glyceroyl phosphate + ADP. Its pathway is carbohydrate degradation; glycolysis; pyruvate from D-glyceraldehyde 3-phosphate: step 2/5. In Pyrococcus furiosus (strain ATCC 43587 / DSM 3638 / JCM 8422 / Vc1), this protein is Phosphoglycerate kinase (pgk).